A 434-amino-acid chain; its full sequence is Beta-enolase (434 aa).

The residue at position 2 (alanine 2) is an N-acetylalanine. The residue at position 72 (threonine 72) is a Phosphothreonine. A phosphoserine mark is found at serine 83 and serine 157. Substrate-binding residues include histidine 158 and glutamate 167. Serine 176 carries the phosphoserine modification. The residue at position 205 (threonine 205) is a Phosphothreonine. Glutamate 210 serves as the catalytic Proton donor. Phosphothreonine is present on threonine 229. At tyrosine 236 the chain carries Phosphotyrosine. Aspartate 245 contributes to the Mg(2+) binding site. Serine 263 is subject to Phosphoserine. Substrate is bound by residues glutamate 293 and aspartate 318. Residues glutamate 293 and aspartate 318 each coordinate Mg(2+). Lysine 343 serves as the catalytic Proton acceptor. Substrate-binding positions include 370 to 373 (SHRS) and lysine 394.

It belongs to the enolase family. In terms of assembly, mammalian enolase is composed of 3 isozyme subunits, alpha, beta and gamma, which can form homodimers or heterodimers which are cell-type and development-specific. Interacts with PNKD. Requires Mg(2+) as cofactor. In terms of tissue distribution, the alpha/alpha homodimer is expressed in embryo and in most adult tissues. The alpha/beta heterodimer and the beta/beta homodimer are found in striated muscle, and the alpha/gamma heterodimer and the gamma/gamma homodimer in neurons.

The protein resides in the cytoplasm. The enzyme catalyses (2R)-2-phosphoglycerate = phosphoenolpyruvate + H2O. Its pathway is carbohydrate degradation; glycolysis; pyruvate from D-glyceraldehyde 3-phosphate: step 4/5. Glycolytic enzyme that catalyzes the conversion of 2-phosphoglycerate to phosphoenolpyruvate. Appears to have a function in striated muscle development and regeneration. In Oryctolagus cuniculus (Rabbit), this protein is Beta-enolase (ENO3).